The chain runs to 1129 residues: PAN2-PAN3 deadenylation complex catalytic subunit PAN2 (1129 aa).

WD repeat units lie at residues 20-60, 104-146, 148-183, 186-226, and 280-319; these read PPAV…YTSY, PDFK…DTLP, DAQYTIMKRAGQYLCAATKTGGIHILDSNSLSVIKV, GHTG…FSLK, and LYDSYLAGFEMAPSGEAFALADSNSNVHLWGSPAKVHFPE. The segment at 320 to 457 is linker; the sequence is YSNPTEFADH…DLHLDDVTRK (138 aa). Positions 396 to 427 are disordered; that stretch reads RTKRRNQIEVTRQTDRSSDSLTPPKFLSEKSR. A USP domain is found at 458 to 830; the sequence is DVPAMYGNVE…LPSVLTFQTK (373 aa). The region spanning 880–1052 is the Exonuclease domain; that stretch reads VAIDAEFIRL…IEDATTALKL (173 aa). A divalent metal cation-binding residues include Asp-883, Glu-885, Asp-992, and Asp-1045. The disordered stretch occupies residues 1083–1129; it reads APGSGNRNSMPAGMTATGAGRDTPEPMTTPKKGGAFGGVGFRSPMRR.

This sequence belongs to the peptidase C19 family. PAN2 subfamily. As to quaternary structure, forms a heterotrimer with an asymmetric homodimer of the regulatory subunit PAN3 to form the poly(A)-nuclease (PAN) deadenylation complex. A divalent metal cation serves as cofactor.

It is found in the cytoplasm. It catalyses the reaction Exonucleolytic cleavage of poly(A) to 5'-AMP.. Its activity is regulated as follows. Positively regulated by the regulatory subunit PAN3. Functionally, catalytic subunit of the poly(A)-nuclease (PAN) deadenylation complex, one of two cytoplasmic mRNA deadenylases involved in mRNA turnover. PAN specifically shortens poly(A) tails of RNA and the activity is stimulated by poly(A)-binding protein PAB1. PAN deadenylation is followed by rapid degradation of the shortened mRNA tails by the CCR4-NOT complex. Deadenylated mRNAs are then degraded by two alternative mechanisms, namely exosome-mediated 3'-5' exonucleolytic degradation, or deadenylation-dependent mRNA decaping and subsequent 5'-3' exonucleolytic degradation by XRN1. May also be involved in post-transcriptional maturation of mRNA poly(A) tails. This is PAN2-PAN3 deadenylation complex catalytic subunit PAN2 from Phaeosphaeria nodorum (strain SN15 / ATCC MYA-4574 / FGSC 10173) (Glume blotch fungus).